The following is a 471-amino-acid chain: Adenosylhomocysteinase (471 aa).

Substrate contacts are provided by T60, D135, and E196. Residue 197–199 (TTT) coordinates NAD(+). Residues K226 and D230 each contribute to the substrate site. NAD(+)-binding positions include N231, 260–265 (GYGDVG), E283, N318, 339–341 (IGH), and N387.

The protein belongs to the adenosylhomocysteinase family. It depends on NAD(+) as a cofactor.

Its subcellular location is the cytoplasm. The catalysed reaction is S-adenosyl-L-homocysteine + H2O = L-homocysteine + adenosine. It participates in amino-acid biosynthesis; L-homocysteine biosynthesis; L-homocysteine from S-adenosyl-L-homocysteine: step 1/1. In terms of biological role, may play a key role in the regulation of the intracellular concentration of adenosylhomocysteine. This Chlorobium luteolum (strain DSM 273 / BCRC 81028 / 2530) (Pelodictyon luteolum) protein is Adenosylhomocysteinase.